A 350-amino-acid chain; its full sequence is 3-isopropylmalate dehydrogenase (350 aa).

71–84 (GPKWADAPRHLRPE) provides a ligand contact to NAD(+). Substrate is bound by residues Arg-91, Arg-101, Arg-129, and Asp-220. Residues Asp-220, Asp-244, and Asp-248 each contribute to the Mg(2+) site. Residue 279-291 (GSAPDIAGKGLAN) participates in NAD(+) binding.

Belongs to the isocitrate and isopropylmalate dehydrogenases family. LeuB type 1 subfamily. Homodimer. Mg(2+) is required as a cofactor. The cofactor is Mn(2+).

Its subcellular location is the cytoplasm. It carries out the reaction (2R,3S)-3-isopropylmalate + NAD(+) = 4-methyl-2-oxopentanoate + CO2 + NADH. It participates in amino-acid biosynthesis; L-leucine biosynthesis; L-leucine from 3-methyl-2-oxobutanoate: step 3/4. Catalyzes the oxidation of 3-carboxy-2-hydroxy-4-methylpentanoate (3-isopropylmalate) to 3-carboxy-4-methyl-2-oxopentanoate. The product decarboxylates to 4-methyl-2 oxopentanoate. The sequence is that of 3-isopropylmalate dehydrogenase from Caulobacter vibrioides (strain ATCC 19089 / CIP 103742 / CB 15) (Caulobacter crescentus).